A 1065-amino-acid chain; its full sequence is Probable arabinosyltransferase B (1065 aa).

12 helical membrane-spanning segments follow: residues 15–37 (WVAT…LPVV), 204–226 (LKLA…LWRL), 241–263 (NWRT…HVIG), 394–413 (YSRL…TLGV), 417–436 (GLIA…RILV), 441–463 (VVGT…TVVF), 510–527 (FGFL…FIML), 540–557 (AWRL…LMFT), 567–589 (LFAA…AVLG), 596–618 (AFLA…WWYV), 633–655 (GGIT…AIWL), and 667–689 (LARA…VFIA).

The protein belongs to the emb family.

It localises to the cell membrane. In terms of biological role, arabinosyl transferase responsible for the polymerization of arabinose into the arabinan of arabinogalactan. The sequence is that of Probable arabinosyltransferase B (embB) from Mycobacterium avium.